Reading from the N-terminus, the 317-residue chain is Ribosomal protein L11 methyltransferase (317 aa).

4 residues coordinate S-adenosyl-L-methionine: threonine 158, glycine 179, aspartate 201, and asparagine 244.

It belongs to the methyltransferase superfamily. PrmA family.

The protein resides in the cytoplasm. It catalyses the reaction L-lysyl-[protein] + 3 S-adenosyl-L-methionine = N(6),N(6),N(6)-trimethyl-L-lysyl-[protein] + 3 S-adenosyl-L-homocysteine + 3 H(+). In terms of biological role, methylates ribosomal protein L11. The sequence is that of Ribosomal protein L11 methyltransferase from Streptococcus mutans serotype c (strain ATCC 700610 / UA159).